A 401-amino-acid chain; its full sequence is S-adenosylmethionine synthase (401 aa).

ATP is bound at residue 136–141; it reads GQGSVD.

This sequence belongs to the AdoMet synthase 2 family. It depends on Mg(2+) as a cofactor.

The catalysed reaction is L-methionine + ATP + H2O = S-adenosyl-L-methionine + phosphate + diphosphate. Its pathway is amino-acid biosynthesis; S-adenosyl-L-methionine biosynthesis; S-adenosyl-L-methionine from L-methionine: step 1/1. In terms of biological role, catalyzes the formation of S-adenosylmethionine from methionine and ATP. The chain is S-adenosylmethionine synthase from Pyrococcus furiosus (strain ATCC 43587 / DSM 3638 / JCM 8422 / Vc1).